We begin with the raw amino-acid sequence, 871 residues long: DNA mismatch repair protein MutS (871 aa).

An ATP-binding site is contributed by 620–627 (GPNMGGKS). A disordered region spans residues 806–837 (HHGGLNEPKQATMELTPPPEAIPSHTEKRNPL).

This sequence belongs to the DNA mismatch repair MutS family.

Its function is as follows. This protein is involved in the repair of mismatches in DNA. It is possible that it carries out the mismatch recognition step. This protein has a weak ATPase activity. This is DNA mismatch repair protein MutS from Idiomarina loihiensis (strain ATCC BAA-735 / DSM 15497 / L2-TR).